Reading from the N-terminus, the 539-residue chain is GMP synthase [glutamine-hydrolyzing] (539 aa).

The 196-residue stretch at 20-215 (TILILDFGSQ…AIEICHAKPN (196 aa)) folds into the Glutamine amidotransferase type-1 domain. Residue C96 is the Nucleophile of the active site. Residues H189 and E191 contribute to the active site. The region spanning 216-413 (WSMENFVDKE…LGIEHSLVWR (198 aa)) is the GMPS ATP-PPase domain. An ATP-binding site is contributed by 244–250 (SGGVDST). Residues R317, D475, K531, and E537 each contribute to the XMP site.

Homodimer. The cofactor is Mg(2+).

It is found in the cytoplasm. Its subcellular location is the cytosol. It catalyses the reaction XMP + L-glutamine + ATP + H2O = GMP + L-glutamate + AMP + diphosphate + 2 H(+). It functions in the pathway purine metabolism; GMP biosynthesis; GMP from XMP (L-Gln route): step 1/1. In terms of biological role, catalyzes the conversion of xanthine monophosphate (XMP) to GMP in the presence of glutamine and ATP through an adenyl-XMP intermediate. The chain is GMP synthase [glutamine-hydrolyzing] from Schizosaccharomyces pombe (strain 972 / ATCC 24843) (Fission yeast).